The following is a 140-amino-acid chain: Large ribosomal subunit protein uL11 (140 aa).

The protein belongs to the universal ribosomal protein uL11 family. In terms of assembly, part of the ribosomal stalk of the 50S ribosomal subunit. Interacts with L10 and the large rRNA to form the base of the stalk. L10 forms an elongated spine to which L12 dimers bind in a sequential fashion forming a multimeric L10(L12)X complex. One or more lysine residues are methylated.

Functionally, forms part of the ribosomal stalk which helps the ribosome interact with GTP-bound translation factors. The protein is Large ribosomal subunit protein uL11 of Lawsonia intracellularis (strain PHE/MN1-00).